A 208-amino-acid polypeptide reads, in one-letter code: V-type ATP synthase subunit D (208 aa).

It belongs to the V-ATPase D subunit family.

Functionally, produces ATP from ADP in the presence of a proton gradient across the membrane. This chain is V-type ATP synthase subunit D, found in Streptococcus pyogenes serotype M6 (strain ATCC BAA-946 / MGAS10394).